The following is a 60-amino-acid chain: Conotoxin Pu5.6 (60 aa).

The N-terminal stretch at 1–19 is a signal peptide; that stretch reads MRCVPVFVILLLLIASAAS. Positions 20-47 are excised as a propeptide; the sequence is IDAQQKTKDDAPLTSLNDNALQQHWNKR.

The protein belongs to the conotoxin T superfamily. Post-translationally, contains 2 disulfide bonds that can be either 'C1-C3, C2-C4' or 'C1-C4, C2-C3', since these disulfide connectivities have been observed for conotoxins with cysteine framework V (for examples, see AC P0DQQ7 and AC P81755). In terms of tissue distribution, expressed by the venom duct.

The protein localises to the secreted. This chain is Conotoxin Pu5.6, found in Conus pulicarius (Flea-bitten cone).